The primary structure comprises 356 residues: Protein-glutamate methylesterase/protein-glutamine glutaminase 3 (356 aa).

The region spanning 3 to 120 (KVAIVDDSAV…KGFLEESQAR (118 aa)) is the Response regulatory domain. Aspartate 54 carries the 4-aspartylphosphate modification. Residues 165–356 (NQTTDRVVAL…AEEIIAFTKQ (192 aa)) form the CheB-type methylesterase domain. Active-site residues include serine 177, histidine 203, and aspartate 299.

The protein belongs to the CheB family. Post-translationally, phosphorylated by CheA. Phosphorylation of the N-terminal regulatory domain activates the methylesterase activity.

Its subcellular location is the cytoplasm. The catalysed reaction is [protein]-L-glutamate 5-O-methyl ester + H2O = L-glutamyl-[protein] + methanol + H(+). It carries out the reaction L-glutaminyl-[protein] + H2O = L-glutamyl-[protein] + NH4(+). In terms of biological role, involved in chemotaxis. Part of a chemotaxis signal transduction system that modulates chemotaxis in response to various stimuli. Catalyzes the demethylation of specific methylglutamate residues introduced into the chemoreceptors (methyl-accepting chemotaxis proteins or MCP) by CheR. Also mediates the irreversible deamidation of specific glutamine residues to glutamic acid. The chain is Protein-glutamate methylesterase/protein-glutamine glutaminase 3 from Shewanella oneidensis (strain ATCC 700550 / JCM 31522 / CIP 106686 / LMG 19005 / NCIMB 14063 / MR-1).